Consider the following 409-residue polypeptide: Peptidase T (409 aa).

His78 contributes to the Zn(2+) binding site. Asp80 is a catalytic residue. Residue Asp140 participates in Zn(2+) binding. Residue Glu174 is the Proton acceptor of the active site. Glu175, Asp197, and His379 together coordinate Zn(2+).

It belongs to the peptidase M20B family. Requires Zn(2+) as cofactor.

Its subcellular location is the cytoplasm. The enzyme catalyses Release of the N-terminal residue from a tripeptide.. Functionally, cleaves the N-terminal amino acid of tripeptides. The polypeptide is Peptidase T (Aliivibrio salmonicida (strain LFI1238) (Vibrio salmonicida (strain LFI1238))).